We begin with the raw amino-acid sequence, 201 residues long: Heat shock protein beta-1 (201 aa).

An Omega-N-methylarginine modification is found at arginine 12. Phosphoserine; by MAPKAPK2 and MAPKAPK3 is present on serine 15. Serine 27 is modified (phosphoserine). An interaction with TGFB1I1 region spans residues 68–201; sequence AYNRALSRQL…AGKSEQPENK (134 aa). The 109-residue stretch at 72–180 folds into the sHSP domain; sequence ALSRQLSSGV…QSAEITIPVT (109 aa). A phosphoserine; by MAPKAPK2, MAPKAPK3 and MAPKAPK5 mark is found at serine 74 and serine 78. 3 positions are modified to phosphoserine: serine 79, serine 82, and serine 94. Residue lysine 119 is modified to N6-acetyllysine. Threonine 170 bears the Phosphothreonine mark. Residues serine 172 and serine 195 each carry the phosphoserine modification.

Belongs to the small heat shock protein (HSP20) family. As to quaternary structure, homooligomer. Homodimer; becomes monomeric upon activation. Heterooligomer; with HSPB6. Associates with alpha- and beta-tubulin. Interacts with TGFB1I1. Interacts with CRYAB. Interacts with HSPB8. Interacts with HSPBAP1. In terms of processing, phosphorylated upon exposure to protein kinase C activators and heat shock. Phosphorylation by MAPKAPK2 and MAPKAPK3 in response to stress dissociates HSPB1 from large small heat-shock protein (sHsps) oligomers and impairs its chaperone activity and ability to protect against oxidative stress effectively. Phosphorylation by MAPKAPK5 in response to PKA stimulation induces F-actin rearrangement.

Its subcellular location is the cytoplasm. The protein localises to the nucleus. It is found in the cytoskeleton. The protein resides in the spindle. Small heat shock protein which functions as a molecular chaperone probably maintaining denatured proteins in a folding-competent state. Plays a role in stress resistance and actin organization. Through its molecular chaperone activity may regulate numerous biological processes including the phosphorylation and the axonal transport of neurofilament proteins. The polypeptide is Heat shock protein beta-1 (HSPB1) (Bos taurus (Bovine)).